The sequence spans 553 residues: Methyl-coenzyme M reductase subunit alpha (553 aa).

Gln-151 is a coenzyme F430 binding site. Coenzyme B is bound by residues Arg-229, 260-261 (KH), and Arg-274. Tyr-336 and Tyr-447 together coordinate coenzyme M.

It belongs to the methyl-coenzyme M reductase alpha subunit family. As to quaternary structure, MCR is a hexamer of two alpha, two beta, and two gamma chains, forming a dimer of heterotrimers. Coenzyme F430 serves as cofactor.

It is found in the cytoplasm. The enzyme catalyses coenzyme B + methyl-coenzyme M = methane + coenzyme M-coenzyme B heterodisulfide. The protein operates within one-carbon metabolism; methyl-coenzyme M reduction; methane from methyl-coenzyme M: step 1/1. Component of the methyl-coenzyme M reductase (MCR) I that catalyzes the reductive cleavage of methyl-coenzyme M (CoM-S-CH3 or 2-(methylthio)ethanesulfonate) using coenzyme B (CoB or 7-mercaptoheptanoylthreonine phosphate) as reductant which results in the production of methane and the mixed heterodisulfide of CoB and CoM (CoM-S-S-CoB). This is the final step in methanogenesis. The chain is Methyl-coenzyme M reductase subunit alpha (mcrA) from Methanococcus vannielii.